A 288-amino-acid polypeptide reads, in one-letter code: Pantothenate synthetase (288 aa).

27–34 (MGALHEGH) contributes to the ATP binding site. The active-site Proton donor is the histidine 34. Glutamine 58 and glutamine 150 together coordinate (R)-pantoate. Glutamine 58 serves as a coordination point for beta-alanine. ATP is bound by residues leucine 173 and 181 to 184 (YSSR).

It belongs to the pantothenate synthetase family. In terms of assembly, homodimer.

It localises to the cytoplasm. The enzyme catalyses (R)-pantoate + beta-alanine + ATP = (R)-pantothenate + AMP + diphosphate + H(+). Its pathway is cofactor biosynthesis; (R)-pantothenate biosynthesis; (R)-pantothenate from (R)-pantoate and beta-alanine: step 1/1. In terms of biological role, catalyzes the condensation of pantoate with beta-alanine in an ATP-dependent reaction via a pantoyl-adenylate intermediate. The chain is Pantothenate synthetase from Tropheryma whipplei (strain TW08/27) (Whipple's bacillus).